A 153-amino-acid polypeptide reads, in one-letter code: UPF0756 membrane protein lwe1581 (153 aa).

Helical transmembrane passes span 6–26 (MLFL…SLII), 54–74 (WGVT…QIGF), 80–100 (SFKS…SILA), and 117–137 (LVFG…GPVI).

The protein belongs to the UPF0756 family.

The protein localises to the cell membrane. This Listeria welshimeri serovar 6b (strain ATCC 35897 / DSM 20650 / CCUG 15529 / CIP 8149 / NCTC 11857 / SLCC 5334 / V8) protein is UPF0756 membrane protein lwe1581.